A 241-amino-acid polypeptide reads, in one-letter code: Small ribosomal subunit protein uS2 (241 aa).

Belongs to the universal ribosomal protein uS2 family.

The polypeptide is Small ribosomal subunit protein uS2 (Salmonella agona (strain SL483)).